A 353-amino-acid chain; its full sequence is Phosphoribosylformylglycinamidine cyclo-ligase (353 aa).

The protein belongs to the AIR synthase family.

It is found in the cytoplasm. The catalysed reaction is 2-formamido-N(1)-(5-O-phospho-beta-D-ribosyl)acetamidine + ATP = 5-amino-1-(5-phospho-beta-D-ribosyl)imidazole + ADP + phosphate + H(+). It participates in purine metabolism; IMP biosynthesis via de novo pathway; 5-amino-1-(5-phospho-D-ribosyl)imidazole from N(2)-formyl-N(1)-(5-phospho-D-ribosyl)glycinamide: step 2/2. The sequence is that of Phosphoribosylformylglycinamidine cyclo-ligase from Dinoroseobacter shibae (strain DSM 16493 / NCIMB 14021 / DFL 12).